Here is a 405-residue protein sequence, read N- to C-terminus: POC1 centriolar protein homolog A (405 aa).

WD repeat units lie at residues 17-56, 59-98, 101-140, 143-182, 185-224, 227-266, and 269-308; these read GHRD…RAYR, GHKD…ESTV, AHTA…FLFS, QHIN…CIHS, EHGG…LLQH, LHSA…LLYT, and GHQG…VDYG. A disordered region spans residues 313-352; it reads RRPPPLTSSSGTLPKMDLPVPPGRDRSLESVQGEPQESIS. The segment covering 341 to 352 has biased composition (polar residues); the sequence is ESVQGEPQESIS. Residues 367 to 395 adopt a coiled-coil conformation; it reads QLDILTQTVSILEQRLTLTEDRLKQCLEN.

The protein belongs to the WD repeat POC1 family. In terms of assembly, interacts with POC1B. As to expression, widely expressed in embryonic and adult tissues.

It localises to the cytoplasm. The protein resides in the cytoskeleton. The protein localises to the microtubule organizing center. Its subcellular location is the centrosome. It is found in the centriole. It localises to the cilium basal body. The protein resides in the spindle pole. In terms of biological role, plays an important role in centriole assembly and/or stability and ciliogenesis. Involved in early steps of centriole duplication, as well as in the later steps of centriole length control. Acts in concert with POC1B to ensure centriole integrity and proper mitotic spindle formation. The polypeptide is POC1 centriolar protein homolog A (Poc1a) (Mus musculus (Mouse)).